We begin with the raw amino-acid sequence, 303 residues long: Proteasome subunit beta (303 aa).

The propeptide at 1-64 is removed in mature form; by autocatalysis; that stretch reads MTWPDRDTSA…VTPSDAVPHG (64 aa). Threonine 65 functions as the Nucleophile in the catalytic mechanism.

The protein belongs to the peptidase T1B family. The 20S proteasome core is composed of 14 alpha and 14 beta subunits that assemble into four stacked heptameric rings, resulting in a barrel-shaped structure. The two inner rings, each composed of seven catalytic beta subunits, are sandwiched by two outer rings, each composed of seven alpha subunits. The catalytic chamber with the active sites is on the inside of the barrel. Has a gated structure, the ends of the cylinder being occluded by the N-termini of the alpha-subunits. Is capped by the proteasome-associated ATPase, ARC.

It is found in the cytoplasm. It carries out the reaction Cleavage of peptide bonds with very broad specificity.. It participates in protein degradation; proteasomal Pup-dependent pathway. Its activity is regulated as follows. The formation of the proteasomal ATPase ARC-20S proteasome complex, likely via the docking of the C-termini of ARC into the intersubunit pockets in the alpha-rings, may trigger opening of the gate for substrate entry. Interconversion between the open-gate and close-gate conformations leads to a dynamic regulation of the 20S proteasome proteolysis activity. Functionally, component of the proteasome core, a large protease complex with broad specificity involved in protein degradation. In Mycolicibacterium gilvum (strain PYR-GCK) (Mycobacterium gilvum (strain PYR-GCK)), this protein is Proteasome subunit beta.